Reading from the N-terminus, the 105-residue chain is uncharacterized protein (105 aa).

Belongs to the asfivirus C122R family.

The protein localises to the virion. This is an uncharacterized protein from African swine fever virus (strain Badajoz 1971 Vero-adapted) (Ba71V).